Reading from the N-terminus, the 361-residue chain is 3,6-anhydro-alpha-L-galactonate cycloisomerase (361 aa).

The active-site Proton acceptor is lysine 166. The Mg(2+) site is built by aspartate 195, glutamate 221, and glutamate 247. Residue histidine 297 is the Proton donor/acceptor of the active site.

This sequence belongs to the mandelate racemase/muconate lactonizing enzyme family. The cofactor is Mg(2+).

It carries out the reaction 3,6-anhydro-L-galactonate = 2-dehydro-3-deoxy-L-galactonate. Its function is as follows. Involved in the degradation of 3,6-anhydro-L-galactose, which is the major monomeric sugar of red macroalgae. Catalyzes the isomerization of 3,6-anhydrogalactonate (AHGA) to 2-keto-3-deoxy-galactonate (KDGal). This chain is 3,6-anhydro-alpha-L-galactonate cycloisomerase, found in Streptomyces coelicolor (strain ATCC BAA-471 / A3(2) / M145).